Reading from the N-terminus, the 378-residue chain is Stimulator of interferon genes protein (378 aa).

The Cytoplasmic segment spans residues 1–17 (MPYSSLHPSIPQPRGLR). A mediates interaction with ZDHHC1 and ZDHHC11 region spans residues 1-190 (MPYSSLHPSI…AYNQRHKNVL (190 aa)). Residues 18 to 34 (AQVAALVLLGACLVALW) form a helical membrane-spanning segment. The Lumenal portion of the chain corresponds to 35 to 44 (GLGELPEYTL). A helical transmembrane segment spans residues 45–69 (RWLVLHLASQQIGLLVKGLCSLAEE). Residues 70 to 91 (LCHVHSRYQSSYWRAARACLGC) lie on the Cytoplasmic side of the membrane. Residues cysteine 88 and cysteine 91 are each lipidated (S-palmitoyl cysteine). A helical membrane pass occupies residues 92-106 (PIRCGALLLLSCYFY). Residues 107–116 (FSIRDKAGLP) lie on the Lumenal side of the membrane. The helical transmembrane segment at 117–134 (LPWMLALLGLSQALNILL) threads the bilayer. Over 135–378 (GLQHLAPAEV…QPLPLRSDIF (244 aa)) the chain is Cytoplasmic. Lysine 150 is covalently cross-linked (Glycyl lysine isopeptide (Lys-Gly) (interchain with G-Cter in ubiquitin)). A cyclic dinucleotide-binding domain (CBD) region spans residues 153–339 (FNVAHGLAWS…LRHLRQEERE (187 aa)). 2',3'-cGAMP contacts are provided by serine 162 and tyrosine 167. Residues serine 162 and tyrosine 167 each coordinate 3',3'-c-di-GMP. Tyrosine 167 contributes to the 2',3'-cUAMP binding site. Residue lysine 236 forms a Glycyl lysine isopeptide (Lys-Gly) (interchain with G-Cter in ubiquitin) linkage. The 2',3'-cGAMP site is built by arginine 238 and threonine 263. The 2',3'-cUAMP site is built by arginine 238 and threonine 263. 3',3'-c-di-GMP is bound by residues 238–241 (RVYT) and threonine 263. The segment at 339 to 378 (EVTMGSAETSVVPTSSTLSQEPELLISGMEQPLPLRSDIF) is C-terminal tail (CTT). Serine 354 carries the post-translational modification Phosphoserine. Threonine 355 is modified (phosphothreonine). Residues serine 357 and serine 365 each carry the phosphoserine; by TBK1 modification. A pLxIS motif motif is present at residues 362–365 (LLIS).

Belongs to the STING family. As to quaternary structure, homodimer; forms a homodimer in absence of cyclic nucleotide (c-di-GMP or cGAMP); 'Lys-63'-linked ubiquitination at Lys-150 is required for homodimerization. Homotetramer; in presence of cyclic nucleotide (c-di-GMP or cGAMP), forms tetramers and higher-order oligomers through side-by-side packing. Interacts (when phosphorylated) with IRF3; following activation and phosphorylation on the pLxIS motif by TBK1, recruits IRF3. Interacts with DDX58/RIG-I, MAVS and SSR2. Interacts with RNF5 and TRIM56. Interacts with TBK1; when homodimer, leading to subsequent production of IFN-beta. Interacts with IFIT1 and IFIT2. Interacts with TRIM29; this interaction induces STING1 ubiquitination and subsequent degradation. Associates with the MHC-II complex. Interacts with STEEP1; interaction takes place upon cGAMP-activation and STING1 phosphorylation by MAP3K7/TAK1 and promotes STING1 translocation to COPII vesicles. Interacts with SEC24A, SEC24B and SEC24C; promoting translocation to COPII vesicles. Interacts (when ubiquitinated) with SQSTM1; leading to relocalization to autophagosomes. Interacts with SURF4. Interacts with HNRNPA2B1. Interacts with ZDHHC1; ZDHHC1 constitutively interacts with STING1 and in presence of DNA viruses activates it by promoting its cGAMP-induced oligomerization and the recruitment of downstream signaling components. Interacts with ZDHHC11; in presence of DNA viruses promotes the recruitment of IRF3 to STING1. Interacts with TOMM70. Interacts with TAB1; promoting recruitment of TAB1 to the endoplasmic reticulum membrane and subsequent activation of MAP3K7/TAK1. Interacts (via transmembrane domain) with TMEM203. Interacts with DDX41. In terms of assembly, (Microbial infection) Interacts with African swine fever virus/ASFV protein A528R; this interaction mediates STING1 degradation. (Microbial infection) Interacts with African swine fever virus/ASFV minor capsid protein p17. As to quaternary structure, (Microbial infection) Interacts with Pseudorabies virus protein UL13; this interaction mediates STING1 degradation in a RNF5-dependent manner. Phosphorylation by TBK1 leads to activation and production of IFN-beta. Following cyclic nucleotide (c-di-GMP or cGAMP)-binding, activation and translocation from the endoplasmic reticulum, STING1 is phosphorylated by TBK1 at Ser-365 in the pLxIS motif. The phosphorylated pLxIS motif constitutes an IRF3-binding motif, leading to recruitment of the transcription factor IRF3 to induce type-I interferons and other cytokines. Phosphorylated on tyrosine residues upon MHC-II aggregation. Dephosphorylation by PPP6C leads to inactivation and decreased production of IFN-beta. Phosphorylation at Ser-357 is also required to activate IRF3. Phosphorylation at Ser-354 by MAP3K7/TAK1 facilitates its interaction with STEEP1, promoting STING1 translocation to COPII vesicles. In terms of processing, ubiquitinated. Ubiquitinated via 'Lys-63'-linked ubiquitin chains in response to double-stranded DNA treatment, leading to relocalization to autophagosomes and subsequent degradation; this process is dependent on SQSTM1. 'Lys-63'-linked ubiquitination mediated by TRIM56 at Lys-150 promotes homodimerization and recruitment of the antiviral kinase TBK1 and subsequent production of IFN-beta. 'Lys-48'-linked polyubiquitination at Lys-150 occurring after viral infection is mediated by RNF5 and leads to proteasomal degradation. 'Lys-11'-linked polyubiquitination at Lys-150 by RNF26 leads to stabilize STING1: it protects STING1 from RNF5-mediated 'Lys-48'-linked polyubiquitination. 'Lys-33'-linked and 'Lys-48'-linked deubiquitinated by USP20; leading to its stabilization and promotion of innate antiviral response. 'Lys-48'-linked deubiquitinated by USP44; leading to its stabilization and promotion of innate antiviral response. Deubiquitinated by USP13; leading to inhibition of innate antiviral response. 'Lys-63'-linked deubiquitinated by USP49; leading to inhibition of the subsequent recruitment of TBK1 to the signaling complex. 'Lys-63'-linked ubiquitination mediated by RNF39 promotes the activation of the cGAS-STING pathway. Post-translationally, palmitoylation takes place in the Golgi apparatus and creates a platform for the recruitment of TBK1. Expressed at higher level in the spleen, lymph node, lung and bone marrow, followed by the small intestine, heart, liver and brain, and to a lesser extent in the stomach and kidney.

It localises to the endoplasmic reticulum membrane. It is found in the cytoplasm. Its subcellular location is the perinuclear region. The protein localises to the endoplasmic reticulum-Golgi intermediate compartment membrane. The protein resides in the golgi apparatus membrane. It localises to the cytoplasmic vesicle. It is found in the autophagosome membrane. Its subcellular location is the mitochondrion outer membrane. The protein localises to the cell membrane. The catalysed reaction is H(+)(in) = H(+)(out). Its function is as follows. Facilitator of innate immune signaling that acts as a sensor of cytosolic DNA from bacteria and viruses and promotes the production of type I interferon (IFN-alpha and IFN-beta). Innate immune response is triggered in response to non-CpG double-stranded DNA from viruses and bacteria delivered to the cytoplasm. Acts by binding cyclic dinucleotides: recognizes and binds cyclic di-GMP (c-di-GMP), a second messenger produced by bacteria, cyclic UMP-AMP (2',3'-cUAMP), and cyclic GMP-AMP (cGAMP), a messenger produced by CGAS in response to DNA virus in the cytosol. Upon binding to c-di-GMP, cUAMP or cGAMP, STING1 oligomerizes, translocates from the endoplasmic reticulum and is phosphorylated by TBK1 on the pLxIS motif, leading to recruitment and subsequent activation of the transcription factor IRF3 to induce expression of type I interferon and exert a potent anti-viral state. Exhibits 2',3' phosphodiester linkage-specific ligand recognition: can bind both 2'-3' linked cGAMP (2'-3'-cGAMP) and 3'-3' linked cGAMP but is preferentially activated by 2'-3' linked cGAMP. The preference for 2'-3'-cGAMP, compared to other linkage isomers is probably due to the ligand itself, whichs adopts an organized free-ligand conformation that resembles the STING1-bound conformation and pays low energy costs in changing into the active conformation. In addition to promote the production of type I interferons, plays a direct role in autophagy. Following cGAMP-binding, STING1 buds from the endoplasmic reticulum into COPII vesicles, which then form the endoplasmic reticulum-Golgi intermediate compartment (ERGIC). The ERGIC serves as the membrane source for WIPI2 recruitment and LC3 lipidation, leading to formation of autophagosomes that target cytosolic DNA or DNA viruses for degradation by the lysosome. Promotes autophagy by acting as a proton channel that directs proton efflux from the Golgi to facilitate MAP1LC3B/LC3B lipidation. The autophagy- and interferon-inducing activities can be uncoupled and autophagy induction is independent of TBK1 phosphorylation. Autophagy is also triggered upon infection by bacteria: following c-di-GMP-binding, which is produced by live Gram-positive bacteria, promotes reticulophagy. May be involved in translocon function, the translocon possibly being able to influence the induction of type I interferons. May be involved in transduction of apoptotic signals via its association with the major histocompatibility complex class II (MHC-II). The protein is Stimulator of interferon genes protein of Sus scrofa (Pig).